The sequence spans 389 residues: 1-acyl-sn-glycerol-3-phosphate acyltransferase 2 (389 aa).

The chain crosses the membrane as a helical span at residues 2–22; that stretch reads VIAAAVIVPLGLLFFISGLAV. The short motif at 91–96 is the HXXXXD motif element; sequence HRSDID. 2 consecutive transmembrane segments (helical) span residues 305–325 and 333–353; these read LAVV…FLHW and KGIT…QILI. A disordered region spans residues 357–389; sequence QSERSTPAKVVPAKPKDNHHPESSSQTETEKEK. A compositionally biased stretch (basic and acidic residues) spans 370 to 389; that stretch reads KPKDNHHPESSSQTETEKEK.

It belongs to the 1-acyl-sn-glycerol-3-phosphate acyltransferase family. As to quaternary structure, interacts with GPAT9 and DGAT1. As to expression, present in roots, leaves, stems, floral buds and siliques (at protein level). Widely expressed. In contrast to LPAT1, it is not expressed at higher level in leaves.

It localises to the endoplasmic reticulum membrane. The enzyme catalyses a 1-acyl-sn-glycero-3-phosphate + an acyl-CoA = a 1,2-diacyl-sn-glycero-3-phosphate + CoA. It participates in phospholipid metabolism; CDP-diacylglycerol biosynthesis; CDP-diacylglycerol from sn-glycerol 3-phosphate: step 2/3. In terms of biological role, converts lysophosphatidic acid (LPA) into phosphatidic acid by incorporating acyl moiety at the 2 position. Has preference for C-18-CoA substrates compared to C-16-CoA substrates. Required for female but not male gametophyte development. The protein is 1-acyl-sn-glycerol-3-phosphate acyltransferase 2 (LPAT2) of Arabidopsis thaliana (Mouse-ear cress).